The sequence spans 494 residues: Probable terminase, large subunit (494 aa).

26–33 serves as a coordination point for ATP; the sequence is ADVLFGKT. The Walker A motif motif lies at 56–63; sequence SGHGTGKS. The short motif at 158 to 163 is the Walker B motif element; it reads LYIIDE. Glutamate 163 serves as the catalytic For ATPase activity. The Mg(2+) site is built by aspartate 293, aspartate 356, and aspartate 446.

The protein belongs to the punalikevirus large terminase family. Interacts with pacA protein. It depends on Mg(2+) as a cofactor.

Functionally, component of the molecular motor that translocates genomic DNA in empty capsid during DNA packaging. Heterooligomerize with small terminase protein to be docked on capsid portal protein. Forms a ring-like structure through which genomic DNA is translocated into the capsid. May have or induce an endonuclease activity to cleave the genome concatemer after encapsidation. The chain is Probable terminase, large subunit (pacB) from Escherichia coli (Bacteriophage P7).